A 780-amino-acid polypeptide reads, in one-letter code: Protein SEY1 (780 aa).

Residues 1 to 680 (MDSKEEAIQL…KRSMIKTTTH (680 aa)) lie on the Cytoplasmic side of the membrane. The region spanning 35-265 (GVNYHVISVF…NEDYYFKPEY (231 aa)) is the GB1/RHD3-type G domain. 45–52 (GSQSSGKS) contacts GTP. A coiled-coil region spans residues 440–463 (EVKEEVVKRFENDLKETSDKLRVT). A helical transmembrane segment spans residues 681–701 (IPLWIYAIIVVLGWNEFMMVI). Residues 702-704 (RNP) lie on the Lumenal side of the membrane. The helical transmembrane segment at 705 to 725 (LFVTLTILILVSFYFINKFDL) threads the bilayer. Residues 726 to 780 (WGPVKSVAQTAAGETIGTIKTKLRDFVLEEHEKTPKIQSEKSNSDSEKVVENEKS) are Cytoplasmic-facing. A disordered region spans residues 756–780 (HEKTPKIQSEKSNSDSEKVVENEKS).

It belongs to the TRAFAC class dynamin-like GTPase superfamily. GB1/RHD3 GTPase family. RHD3 subfamily.

It is found in the endoplasmic reticulum membrane. In terms of biological role, cooperates with the reticulon proteins and tubule-shaping DP1 family proteins to generate and maintain the structure of the tubular endoplasmic reticulum network. Has GTPase activity, which is required for its function in ER organization. The sequence is that of Protein SEY1 from Vanderwaltozyma polyspora (strain ATCC 22028 / DSM 70294 / BCRC 21397 / CBS 2163 / NBRC 10782 / NRRL Y-8283 / UCD 57-17) (Kluyveromyces polysporus).